The primary structure comprises 233 residues: Attacin-B (233 aa).

Residues 1-17 (MFAKLFLVSVLLVGVNS) form the signal peptide. A propeptide spanning residues 18-46 (RYVLVEEPGYYDKQYEEQPQQWVNSRVRR) is cleaved from the precursor.

This sequence belongs to the attacin/sarcotoxin-2 family.

The protein resides in the secreted. Hemolymph antibacterial protein. The sequence is that of Attacin-B from Hyalophora cecropia (Cecropia moth).